Consider the following 249-residue polypeptide: Mediator of RNA polymerase II transcription subunit 8 (249 aa).

Positions 1 to 26 (MQREEKQLDMLLEAVLNRLNDLKHSI) form a coiled coil. Polar residues-rich tracts occupy residues 215–224 (SPMSAVSPSG) and 235–249 (IKTN…HPYR). Residues 215 to 249 (SPMSAVSPSGNAPMGKMPSGIKTNIKSANQVHPYR) form a disordered region.

The protein belongs to the Mediator complex subunit 8 family. In terms of assembly, component of the Mediator complex.

The protein localises to the nucleus. Its function is as follows. Component of the Mediator complex, a coactivator involved in the regulated transcription of nearly all RNA polymerase II-dependent genes. Mediator functions as a bridge to convey information from gene-specific regulatory proteins to the basal RNA polymerase II transcription machinery. Mediator is recruited to promoters by direct interactions with regulatory proteins and serves as a scaffold for the assembly of a functional preinitiation complex with RNA polymerase II and the general transcription factors. The chain is Mediator of RNA polymerase II transcription subunit 8 (MED8) from Anopheles gambiae (African malaria mosquito).